A 635-amino-acid chain; its full sequence is 1-deoxy-D-xylulose-5-phosphate synthase (635 aa).

Thiamine diphosphate contacts are provided by residues His-79 and 120 to 122; that span reads GHS. Asp-151 is a binding site for Mg(2+). Thiamine diphosphate-binding positions include 152 to 153, Asn-182, Tyr-290, and Glu-372; that span reads GA. Asn-182 serves as a coordination point for Mg(2+).

Belongs to the transketolase family. DXPS subfamily. Homodimer. Mg(2+) serves as cofactor. Requires thiamine diphosphate as cofactor.

The catalysed reaction is D-glyceraldehyde 3-phosphate + pyruvate + H(+) = 1-deoxy-D-xylulose 5-phosphate + CO2. It functions in the pathway metabolic intermediate biosynthesis; 1-deoxy-D-xylulose 5-phosphate biosynthesis; 1-deoxy-D-xylulose 5-phosphate from D-glyceraldehyde 3-phosphate and pyruvate: step 1/1. Its function is as follows. Catalyzes the acyloin condensation reaction between C atoms 2 and 3 of pyruvate and glyceraldehyde 3-phosphate to yield 1-deoxy-D-xylulose-5-phosphate (DXP). This chain is 1-deoxy-D-xylulose-5-phosphate synthase, found in Stenotrophomonas maltophilia (strain K279a).